Here is a 278-residue protein sequence, read N- to C-terminus: Beta-lactamase-like protein str5 (278 aa).

The chain crosses the membrane as a helical span at residues 20–37 (VFVLAALLSATFAFFTHT). Asn-112 is a glycosylation site (N-linked (GlcNAc...) asparagine).

Belongs to the beta-lactamase family.

The protein resides in the membrane. It functions in the pathway mycotoxin biosynthesis. Beta-lactamase-like protein; part of the gene cluster that mediates the biosynthesis of strobilurin A, an antifungal polyketide that contains a key beta-methoxyacrylate toxophore that targets the complex III of the mitochondrial electron transport chain. Strobilurin biosynthesis begins with construction of benzoyl CoA by step-wise elimination of ammonia from phenylalanine by the phenylalanine ammonia-lyase str11, oxygenation by str8 and retro-Claisen reaction to form benzoic acid, which is activated to its CoA thiolester benzoyl CoA by the dedicated CoA ligase str10. Benzoyl CoA forms the starter unit for the highly reducing polyketide synthase stpks1 that produces the polyketide prestrobilutin A. The FAD-dependent oxygenase str9 then catalyzes the key oxidative rearrangement responsible for the creation of the beta-methoxyacrylate toxophore. Str9 performs epoxidation of the 2,3 olefin of prestrobilutin A, followed by Meinwald rearrangement to furnish the aldehyde intermediate. Rapid enolization of the aldehyde intermediate would give the beta-methoxyacrylate skeleton and methylations catalyzed by str2 and str3 complete the synthesis and lead to the production of strobilurin A. The short-chain dehydrogenase stl2 and the dehydrogenase str4 play a role in the shunt pathway leading to the production of bolineol. The cluster encodes no obvious halogenase gene that could be involved in production of strobilurin B, nor any obvious dimethylallyl-transferase that could be involved in the production of strobilurin G. It is possible that unknown proteins encoded in, or near, the cluster (such as str1 or stl1) may form new classes of halogenases or dimethylally-transferases, or that the responsible genes are located elsewhere on the genome. Similarly, proteins encoded by str5/str6 hydrolases appear to have no chemical role in the biosynthesis of strobilurin A. Finally, no obvious self-resistance gene is found within the cluster. This chain is Beta-lactamase-like protein str5, found in Strobilurus tenacellus.